The primary structure comprises 695 residues: Rho-related BTB domain-containing protein 1 (695 aa).

The rho-like stretch occupies residues 1–210 (MDSDMDYERP…DNAIRAALIS (210 aa)). GTP is bound by residues 21-28 (GDNAVGKT), 84-88 (DTFGD), and 140-143 (CQLD). BTB domains lie at 266-426 (ADVL…DEKE) and 484-551 (SDVT…SPNL). The tract at residues 325-351 (SLGSAEEGKEGPQRTPQADPGASSGQD) is disordered.

This sequence belongs to the small GTPase superfamily. Rho family. As to expression, highest expression in heart and testis.

The sequence is that of Rho-related BTB domain-containing protein 1 (Rhobtb1) from Mus musculus (Mouse).